Consider the following 515-residue polypeptide: ATP synthase subunit alpha (515 aa).

169–176 (GDRQTGKT) is an ATP binding site.

Belongs to the ATPase alpha/beta chains family. In terms of assembly, F-type ATPases have 2 components, CF(1) - the catalytic core - and CF(0) - the membrane proton channel. CF(1) has five subunits: alpha(3), beta(3), gamma(1), delta(1), epsilon(1). CF(0) has three main subunits: a(1), b(2) and c(9-12). The alpha and beta chains form an alternating ring which encloses part of the gamma chain. CF(1) is attached to CF(0) by a central stalk formed by the gamma and epsilon chains, while a peripheral stalk is formed by the delta and b chains.

Its subcellular location is the cell inner membrane. It catalyses the reaction ATP + H2O + 4 H(+)(in) = ADP + phosphate + 5 H(+)(out). In terms of biological role, produces ATP from ADP in the presence of a proton gradient across the membrane. The alpha chain is a regulatory subunit. The sequence is that of ATP synthase subunit alpha from Neisseria meningitidis serogroup C (strain 053442).